The primary structure comprises 423 residues: Cop9 signalosome complex subunit 12 (423 aa).

The region spanning 232–418 is the PCI domain; it reads GFFHLNEALL…RCIVFSKKEP (187 aa).

Belongs to the CSN12 family. Component of a COP9 signalosome-like (CSN) complex, composed of RRI1/CSN5, CSN9, RRI2/CSN10, PCI8/CSN11, CSN12 and CSI1. In the complex, it probably interacts directly with RRI1/CSN5, CSN9, RRI2/CSN10 and CSI1. Interacts with SEM1 and THP3.

The protein resides in the cytoplasm. The protein localises to the nucleus. In terms of biological role, component of the COP9 signalosome (CSN) complex that acts as an regulator of the ubiquitin (Ubl) conjugation pathway by mediating the deneddylation of the cullin subunit of SCF-type E3 ubiquitin-protein ligase complexes. The CSN complex is involved in the regulation of the mating pheromone response. CSN12 forms a complex with THP3 that is recruited to transcribed genes and required for transcription elongation. The chain is Cop9 signalosome complex subunit 12 (CSN12) from Saccharomyces cerevisiae (strain ATCC 204508 / S288c) (Baker's yeast).